The sequence spans 720 residues: Receptor-like protein CLAVATA2 (720 aa).

Residues M1–S25 form the signal peptide. Positions Q26–S92 are N-cap. The Extracellular portion of the chain corresponds to Q26–S686. 6 N-linked (GlcNAc...) asparagine glycosylation sites follow: N49, N62, N84, N108, N127, and N168. C60 and C68 are joined by a disulfide. 21 LRR repeats span residues L96–N122, R124–L144, E146–N168, S170–L194, K195–P217, V219–S238, R239–L263, K264–S287, E288–T311, K314–L338, K339–L362, Y364–C386, Q388–L410, D411–S436, E438–W458, S459–F482, K484–S506, L547–Q571, N573–L594, P595–A617, and P619–L641. N206 carries N-linked (GlcNAc...) asparagine glycosylation. N-linked (GlcNAc...) asparagine glycosylation is present at N270. N361 is a glycosylation site (N-linked (GlcNAc...) asparagine). N398 is a glycosylation site (N-linked (GlcNAc...) asparagine). A glycan (N-linked (GlcNAc...) asparagine) is linked at N446. The N-linked (GlcNAc...) asparagine glycan is linked to N505. Residues N578, N614, and N625 are each glycosylated (N-linked (GlcNAc...) asparagine). Residues A649–E682 form a C-cap/acidic domain region. A helical transmembrane segment spans residues I687–C707. The Cytoplasmic portion of the chain corresponds to S708–A720.

Belongs to the RLP family. Parts of a tetrameric complex made of two CLV2/CRN heterodimers that can interact with CLV3 and CLE peptides. CLV2/CRN heterodimer interacts with CLV1 homodimers. Interacts with CRN; this dimer can interact with BAM3. Interacts with CLE14. As to expression, mostly expressed in apices (e.g. shoot apical meristem and flower buds), and, to a lower extent, in flowers, leaves, seedlings and siliques. Also expressed in the inner tissues of the proximal root meristem. Expressed throughout the vascular cylinder of root tips.

It is found in the cell membrane. Its subcellular location is the endoplasmic reticulum membrane. Functionally, involved in the perception of CLV3 and CLV3-like (CLE) peptides, that act as extracellular signals regulating meristems maintenance. Required for the sensing of the root CLE peptides (e.g. CLE8, CLE9/CLE10, CLE11, CLE13, CLE14, CLE16, CLE17, CLE18, CLE20, CLE21, CLE25, CLE26, CLE40, CLE41/CLE44 and CLE45), which also involves CRN and leads to root growth regulation, mostly in the phloem and protophloem. Involved in controlling the stem cell population size in shoot and root apical meristems, and during organ development. Promotes the formation of CLV1 multimers. In complex with CRN, perceives secreted CLV3-like effector proteins from plant-parasitic cyst nematodes as ligand mimics of the plant CLE signaling pathway. This recognition is required for proper feeding structure (syncytium) development and ultimately successful nematode infection. CLE14 perception by CLV2/CRN complex triggers root meristem differentiation. The protein is Receptor-like protein CLAVATA2 of Arabidopsis thaliana (Mouse-ear cress).